The sequence spans 1108 residues: Retinal guanylyl cyclase 1 (1108 aa).

A signal peptide spans 1 to 54; that stretch reads MSAWLLPAGGLPGAGFCVPARQSPSSFSRVLRWPRPGLPGLLLLLLLPSPSALS. The Extracellular portion of the chain corresponds to 55 to 465; the sequence is AVFKVGVLGP…PDVICNGGVE (411 aa). C108 and C136 are oxidised to a cystine. N300 carries N-linked (GlcNAc...) asparagine glycosylation. A helical transmembrane segment spans residues 466–490; the sequence is PGLVFVGFLLVIGMGLTGAFLAHYL. The region spanning 491 to 811 is the Protein kinase domain; it reads RHRLLHMQMA…DLTFDLFKSI (321 aa). Residues 491–1108 lie on the Cytoplasmic side of the membrane; it reads RHRLLHMQMA…KARPGQFTGK (618 aa). The Guanylate cyclase domain maps to 883–1013; it reads TLYFSDIVGF…DTVNTASRME (131 aa). Residues 1069–1108 are disordered; sequence IPKPPDLQPGASNHGISLQEIPPERRKKLEKARPGQFTGK.

It belongs to the adenylyl cyclase class-4/guanylyl cyclase family. As to quaternary structure, homodimer; requires homodimerization for guanylyl cyclase activity. Interacts (via C-terminus) with RD3 (via C-terminus); promotes the exit of GUCY2E from the endoplasmic reticulum and its trafficking to the photoreceptor outer segments. Interaction with RD3 negatively regulates GUCY2E guanylate cyclase activity. Post-translationally, there are 9 conserved cysteine residues in sensory guanylate cyclases, 6 in the extracellular domain, which may be involved in intra- or interchain disulfide bonds.

The protein resides in the photoreceptor outer segment membrane. It is found in the endoplasmic reticulum membrane. It catalyses the reaction GTP = 3',5'-cyclic GMP + diphosphate. With respect to regulation, activated by GUCA1A when free calcium ions concentration is low, and inhibited by GUCA1A when free calcium ions concentration is high. Negatively regulated by RD3; RD3 inhibits the basal and GUCA1A-stimulated guanylate cyclase activity. Its function is as follows. Catalyzes the synthesis of cyclic GMP (cGMP) in rods and cones of photoreceptors. Plays an essential role in phototransduction, by mediating cGMP replenishment. May also participate in the trafficking of membrane-asociated proteins to the photoreceptor outer segment membrane. The sequence is that of Retinal guanylyl cyclase 1 (Gucy2e) from Mus musculus (Mouse).